The chain runs to 400 residues: Phosphoglycerate kinase (400 aa).

Substrate-binding positions include 20 to 22, Arg-35, 58 to 61, Arg-115, and Arg-155; these read DLN and HQGR. ATP is bound by residues Glu-330 and 356-359; that span reads GGDT.

It belongs to the phosphoglycerate kinase family. In terms of assembly, monomer.

The protein resides in the cytoplasm. The enzyme catalyses (2R)-3-phosphoglycerate + ATP = (2R)-3-phospho-glyceroyl phosphate + ADP. Its pathway is carbohydrate degradation; glycolysis; pyruvate from D-glyceraldehyde 3-phosphate: step 2/5. This Haloarcula marismortui (strain ATCC 43049 / DSM 3752 / JCM 8966 / VKM B-1809) (Halobacterium marismortui) protein is Phosphoglycerate kinase.